The primary structure comprises 766 residues: BMP/retinoic acid-inducible neural-specific protein 3 (766 aa).

The signal sequence occupies residues 1-33; that stretch reads MIWRRRAGAELSSLMALWEWIVLSLHCWVLAVA. The 191-residue stretch at 74 to 264 folds into the MACPF domain; sequence RYKIYREFGR…FVQAALSYIA (191 aa). N-linked (GlcNAc...) asparagine glycosylation is found at N168, N337, N456, N562, N609, and N641.

This sequence belongs to the BRINP family. Expressed in olfactory bulb, cerebellum and neuronal layers in hippocampus.

It is found in the secreted. It localises to the mitochondrion. Functionally, inhibits neuronal cell proliferation by negative regulation of the cell cycle transition. Promotes pituitary gonadotrope cell proliferation, migration and invasion, when overexpressed. May play a role in cell pituitary tumor development. This is BMP/retinoic acid-inducible neural-specific protein 3 (Brinp3) from Rattus norvegicus (Rat).